We begin with the raw amino-acid sequence, 138 residues long: Putative transcriptional regulatory protein NedR (138 aa).

Positions 1 to 25 (MCWGRSWTFGRSSSKGWRPTSSASS) are disordered. Residues 9–25 (FGRSSSKGWRPTSSASS) show a composition bias toward polar residues.

In terms of biological role, may serve as a transcriptional regulator. The polypeptide is Putative transcriptional regulatory protein NedR (nedR) (Micromonospora viridifaciens).